Here is a 41-residue protein sequence, read N- to C-terminus: Fibrinogen beta chain (41 aa).

Residues 1–41 are disordered; sequence ADDYDDEVLPDARGHRPIDRKREELPSLRPAPPPISGGGYR. Tyrosine 4 carries the post-translational modification Sulfotyrosine. Residues 10–26 are compositionally biased toward basic and acidic residues; sequence PDARGHRPIDRKREELP. Residues 14 to 16 form a beta-chain polymerization, binding distal domain of another fibrin region; sequence GHR.

As to quaternary structure, heterohexamer; disulfide linked. Contains 2 sets of 3 non-identical chains (alpha, beta and gamma). The 2 heterotrimers are in head to head conformation with the N-termini in a small central domain. Conversion of fibrinogen to fibrin is triggered by thrombin, which cleaves fibrinopeptides A and B from alpha and beta chains, and thus exposes the N-terminal polymerization sites responsible for the formation of the soft clot.

The protein resides in the secreted. Cleaved by the protease thrombin to yield monomers which, together with fibrinogen alpha (FGA) and fibrinogen gamma (FGG), polymerize to form an insoluble fibrin matrix. Fibrin has a major function in hemostasis as one of the primary components of blood clots. In addition, functions during the early stages of wound repair to stabilize the lesion and guide cell migration during re-epithelialization. Was originally thought to be essential for platelet aggregation, based on in vitro studies using anticoagulated blood. However subsequent studies have shown that it is not absolutely required for thrombus formation in vivo. Enhances expression of SELP in activated platelets. Maternal fibrinogen is essential for successful pregnancy. Fibrin deposition is also associated with infection, where it protects against IFNG-mediated hemorrhage. May also facilitate the antibacterial immune response via both innate and T-cell mediated pathways. The chain is Fibrinogen beta chain (FGB) from Oryctolagus cuniculus (Rabbit).